Consider the following 142-residue polypeptide: Large ribosomal subunit protein uL13 (142 aa).

Belongs to the universal ribosomal protein uL13 family. As to quaternary structure, part of the 50S ribosomal subunit.

In terms of biological role, this protein is one of the early assembly proteins of the 50S ribosomal subunit, although it is not seen to bind rRNA by itself. It is important during the early stages of 50S assembly. This is Large ribosomal subunit protein uL13 from Alcanivorax borkumensis (strain ATCC 700651 / DSM 11573 / NCIMB 13689 / SK2).